The following is an 89-amino-acid chain: Small ribosomal subunit protein uS15 (89 aa).

This sequence belongs to the universal ribosomal protein uS15 family. As to quaternary structure, part of the 30S ribosomal subunit. Forms a bridge to the 50S subunit in the 70S ribosome, contacting the 23S rRNA.

One of the primary rRNA binding proteins, it binds directly to 16S rRNA where it helps nucleate assembly of the platform of the 30S subunit by binding and bridging several RNA helices of the 16S rRNA. In terms of biological role, forms an intersubunit bridge (bridge B4) with the 23S rRNA of the 50S subunit in the ribosome. This Halalkalibacterium halodurans (strain ATCC BAA-125 / DSM 18197 / FERM 7344 / JCM 9153 / C-125) (Bacillus halodurans) protein is Small ribosomal subunit protein uS15.